The primary structure comprises 325 residues: Acetyl-coenzyme A carboxylase carboxyl transferase subunit alpha (325 aa).

A CoA carboxyltransferase C-terminal domain is found at 43–297 (ELENNSTQLR…KTSLIAHLRQ (255 aa)).

This sequence belongs to the AccA family. Acetyl-CoA carboxylase is a heterohexamer composed of biotin carboxyl carrier protein (AccB), biotin carboxylase (AccC) and two subunits each of ACCase subunit alpha (AccA) and ACCase subunit beta (AccD).

The protein resides in the cytoplasm. The enzyme catalyses N(6)-carboxybiotinyl-L-lysyl-[protein] + acetyl-CoA = N(6)-biotinyl-L-lysyl-[protein] + malonyl-CoA. It functions in the pathway lipid metabolism; malonyl-CoA biosynthesis; malonyl-CoA from acetyl-CoA: step 1/1. In terms of biological role, component of the acetyl coenzyme A carboxylase (ACC) complex. First, biotin carboxylase catalyzes the carboxylation of biotin on its carrier protein (BCCP) and then the CO(2) group is transferred by the carboxyltransferase to acetyl-CoA to form malonyl-CoA. This chain is Acetyl-coenzyme A carboxylase carboxyl transferase subunit alpha, found in Cyanothece sp. (strain PCC 7425 / ATCC 29141).